The chain runs to 147 residues: Large ribosomal subunit protein bL9 (147 aa).

Belongs to the bacterial ribosomal protein bL9 family.

Its function is as follows. Binds to the 23S rRNA. In Campylobacter jejuni subsp. jejuni serotype O:2 (strain ATCC 700819 / NCTC 11168), this protein is Large ribosomal subunit protein bL9.